A 330-amino-acid chain; its full sequence is Glycerol-3-phosphate dehydrogenase [NAD(P)+] (330 aa).

NADPH-binding residues include serine 11, phenylalanine 12, arginine 32, and lysine 106. Lysine 106, glycine 133, and serine 135 together coordinate sn-glycerol 3-phosphate. Alanine 137 lines the NADPH pocket. Sn-glycerol 3-phosphate is bound by residues lysine 188, aspartate 241, serine 251, arginine 252, and asparagine 253. The Proton acceptor role is filled by lysine 188. NADPH is bound at residue arginine 252. NADPH contacts are provided by valine 276 and glutamate 278.

This sequence belongs to the NAD-dependent glycerol-3-phosphate dehydrogenase family.

It localises to the cytoplasm. It catalyses the reaction sn-glycerol 3-phosphate + NAD(+) = dihydroxyacetone phosphate + NADH + H(+). The catalysed reaction is sn-glycerol 3-phosphate + NADP(+) = dihydroxyacetone phosphate + NADPH + H(+). Its pathway is membrane lipid metabolism; glycerophospholipid metabolism. Its function is as follows. Catalyzes the reduction of the glycolytic intermediate dihydroxyacetone phosphate (DHAP) to sn-glycerol 3-phosphate (G3P), the key precursor for phospholipid synthesis. This is Glycerol-3-phosphate dehydrogenase [NAD(P)+] from Clostridium botulinum (strain Eklund 17B / Type B).